A 170-amino-acid chain; its full sequence is MVDTTKNTKLFTSYGVTTSKAINPDMAAKMISKAKRPLFVVGTGVLRPEILDRAVKIAKKANLPIAATGSSLNGFLDKDVDAKYINVHQLGFYLTDPAWPGLDGKGNYDTIIILEFKKYYINQVLSGTKNFSKVKSISIGKDYIQNATMSFGNISREEHFAALDELIDLL.

It belongs to the CdhB family. As to quaternary structure, heterotetramer of two alpha and two epsilon subunits. The ACDS complex is made up of alpha, epsilon, beta, gamma and delta subunits with a probable stoichiometry of (alpha(2)epsilon(2))(4)-beta(8)-(gamma(1)delta(1))(8).

Its pathway is one-carbon metabolism; methanogenesis from acetate. In terms of biological role, part of a complex that catalyzes the reversible cleavage of acetyl-CoA, allowing growth on acetate as sole source of carbon and energy. The alpha-epsilon subcomponent functions as a carbon monoxide dehydrogenase. The precise role of the epsilon subunit is unclear; it may have a stabilizing role within the alpha(2)epsilon(2) component and/or be involved in electron transfer to FAD during a potential FAD-mediated CO oxidation. This Methanosarcina thermophila protein is Acetyl-CoA decarbonylase/synthase complex subunit epsilon 1 (cdhB1).